We begin with the raw amino-acid sequence, 258 residues long: Aspartate/glutamate leucyltransferase (258 aa).

It belongs to the R-transferase family. Bpt subfamily.

It is found in the cytoplasm. It carries out the reaction N-terminal L-glutamyl-[protein] + L-leucyl-tRNA(Leu) = N-terminal L-leucyl-L-glutamyl-[protein] + tRNA(Leu) + H(+). The catalysed reaction is N-terminal L-aspartyl-[protein] + L-leucyl-tRNA(Leu) = N-terminal L-leucyl-L-aspartyl-[protein] + tRNA(Leu) + H(+). In terms of biological role, functions in the N-end rule pathway of protein degradation where it conjugates Leu from its aminoacyl-tRNA to the N-termini of proteins containing an N-terminal aspartate or glutamate. The protein is Aspartate/glutamate leucyltransferase of Rhizobium leguminosarum bv. trifolii (strain WSM2304).